Reading from the N-terminus, the 378-residue chain is 3-dehydroquinate synthase (378 aa).

Residues 115–119 (GVVGD), 139–140 (TS), Lys-152, and Lys-161 each bind NAD(+). Zn(2+) is bound by residues Glu-194, His-256, and His-275.

It belongs to the sugar phosphate cyclases superfamily. Dehydroquinate synthase family. Requires Co(2+) as cofactor. Zn(2+) is required as a cofactor. NAD(+) serves as cofactor.

It is found in the cytoplasm. It catalyses the reaction 7-phospho-2-dehydro-3-deoxy-D-arabino-heptonate = 3-dehydroquinate + phosphate. It participates in metabolic intermediate biosynthesis; chorismate biosynthesis; chorismate from D-erythrose 4-phosphate and phosphoenolpyruvate: step 2/7. In terms of biological role, catalyzes the conversion of 3-deoxy-D-arabino-heptulosonate 7-phosphate (DAHP) to dehydroquinate (DHQ). In Brucella abortus biovar 1 (strain 9-941), this protein is 3-dehydroquinate synthase.